A 315-amino-acid polypeptide reads, in one-letter code: PDZ domain-containing protein GIPC2 (315 aa).

The span at 1–12 (MPLKLRGKKKAK) shows a compositional bias: basic residues. Residues 1-34 (MPLKLRGKKKAKSKETAGLVEGEPTGAGGGSLSA) form a disordered region. One can recognise a PDZ domain in the interval 117-197 (EVNVYKSEDS…EELFTMKLIE (81 aa)).

The protein belongs to the GIPC family. In terms of assembly, probably interacts with SEMA5A. As to expression, expressed at highest levels in ascending colon and at moderate levels in adult kidney. Expressed at low levels in adult pancreas and at very low levels in adult liver. Expression is down-regulated in several primary tumors, such as kidney, colon and rectal tumors.

It is found in the cytoplasm. The protein is PDZ domain-containing protein GIPC2 (GIPC2) of Homo sapiens (Human).